A 204-amino-acid chain; its full sequence is Elongation factor Ts (204 aa).

The interval 80–83 (TDFV) is involved in Mg(2+) ion dislocation from EF-Tu.

This sequence belongs to the EF-Ts family.

The protein localises to the cytoplasm. Its function is as follows. Associates with the EF-Tu.GDP complex and induces the exchange of GDP to GTP. It remains bound to the aminoacyl-tRNA.EF-Tu.GTP complex up to the GTP hydrolysis stage on the ribosome. This Caldicellulosiruptor saccharolyticus (strain ATCC 43494 / DSM 8903 / Tp8T 6331) protein is Elongation factor Ts.